Here is a 296-residue protein sequence, read N- to C-terminus: 4-hydroxybenzoate octaprenyltransferase (296 aa).

The next 8 membrane-spanning stretches (helical) occupy residues 28–48 (IGTL…SDGI), 51–71 (LAVL…GCVI), 102–122 (LLLT…LNHL), 143–163 (FFPI…PMAF), 174–194 (AWIL…VYAM), 212–232 (FGRY…LLMA), 233–253 (VLGA…IVLL), and 274–294 (FLAN…HTFF).

Belongs to the UbiA prenyltransferase family. Requires Mg(2+) as cofactor.

Its subcellular location is the cell inner membrane. It catalyses the reaction all-trans-octaprenyl diphosphate + 4-hydroxybenzoate = 4-hydroxy-3-(all-trans-octaprenyl)benzoate + diphosphate. It participates in cofactor biosynthesis; ubiquinone biosynthesis. In terms of biological role, catalyzes the prenylation of para-hydroxybenzoate (PHB) with an all-trans polyprenyl group. Mediates the second step in the final reaction sequence of ubiquinone-8 (UQ-8) biosynthesis, which is the condensation of the polyisoprenoid side chain with PHB, generating the first membrane-bound Q intermediate 3-octaprenyl-4-hydroxybenzoate. This is 4-hydroxybenzoate octaprenyltransferase from Neisseria meningitidis serogroup B (strain ATCC BAA-335 / MC58).